A 163-amino-acid chain; its full sequence is Probable ribosome biogenesis protein RLP24 (163 aa).

The protein belongs to the eukaryotic ribosomal protein eL24 family. Associated with nucleolar and cytoplasmic pre-60S particles. At the end of biogenesis it dissociates from cytoplasmic pre-60S particles and is likely to be exchanged for its ribosomal homolog, RPL24.

It localises to the nucleus. Its subcellular location is the nucleolus. Functionally, involved in the biogenesis of the 60S ribosomal subunit. Ensures the docking of GTPBP4/NOG1 to pre-60S particles. This Bos taurus (Bovine) protein is Probable ribosome biogenesis protein RLP24 (RSL24D1).